A 231-amino-acid chain; its full sequence is Small ribosomal subunit protein uS3 (231 aa).

Positions valine 18–alanine 97 constitute a KH type-2 domain.

This sequence belongs to the universal ribosomal protein uS3 family. As to quaternary structure, part of the 30S ribosomal subunit.

Binds the lower part of the 30S subunit head. The sequence is that of Small ribosomal subunit protein uS3 from Sulfolobus acidocaldarius (strain ATCC 33909 / DSM 639 / JCM 8929 / NBRC 15157 / NCIMB 11770).